The primary structure comprises 152 residues: SKP1-like protein 8 (152 aa).

The tract at residues 94-152 is interaction with the F-box domain of F-box proteins; sequence TNAANFLNNKSLLHLAGQTVADMIKGNTPKQMREFFNIENDLTPEEEAAIRRENKWAFE.

This sequence belongs to the SKP1 family. As to quaternary structure, part of a SCF (SKP1-cullin-F-box) protein ligase complex. As to expression, restricted to siliques.

Its subcellular location is the nucleus. It participates in protein modification; protein ubiquitination. Involved in ubiquitination and subsequent proteasomal degradation of target proteins. Together with CUL1, RBX1 and a F-box protein, it forms a SCF E3 ubiquitin ligase complex. The functional specificity of this complex depends on the type of F-box protein. In the SCF complex, it serves as an adapter that links the F-box protein to CUL1. This chain is SKP1-like protein 8 (ASK8), found in Arabidopsis thaliana (Mouse-ear cress).